Consider the following 426-residue polypeptide: Glutamate-1-semialdehyde 2,1-aminomutase (426 aa).

The residue at position 265 (Lys-265) is an N6-(pyridoxal phosphate)lysine.

Belongs to the class-III pyridoxal-phosphate-dependent aminotransferase family. HemL subfamily. Homodimer. Pyridoxal 5'-phosphate is required as a cofactor.

The protein resides in the cytoplasm. The catalysed reaction is (S)-4-amino-5-oxopentanoate = 5-aminolevulinate. The protein operates within porphyrin-containing compound metabolism; protoporphyrin-IX biosynthesis; 5-aminolevulinate from L-glutamyl-tRNA(Glu): step 2/2. The polypeptide is Glutamate-1-semialdehyde 2,1-aminomutase (Cronobacter sakazakii (strain ATCC BAA-894) (Enterobacter sakazakii)).